The chain runs to 137 residues: Large ribosomal subunit protein uL16 (137 aa).

Belongs to the universal ribosomal protein uL16 family. Part of the 50S ribosomal subunit.

In terms of biological role, binds 23S rRNA and is also seen to make contacts with the A and possibly P site tRNAs. The chain is Large ribosomal subunit protein uL16 from Bartonella quintana (strain Toulouse) (Rochalimaea quintana).